The sequence spans 290 residues: Membrane protein insertase YidC 2 (290 aa).

The signal sequence occupies residues 1 to 19; it reads MKKKALLPLFLGIMIFLAG. A lipid anchor (N-palmitoyl cysteine) is attached at C20. C20 carries the S-diacylglycerol cysteine lipid modification. Helical transmembrane passes span 56–76, 134–154, 176–196, 211–231, and 232–252; these read FGLAIIVLVLFIRLILLPFML, MLGCLPILIQMPIIMGLYFVL, PDIWITVIAGVLYFIQAVVSS, MVISPIMIIWISLQASSALGL, and YWSVSALFLVIQTHFANIYYS. The tract at residues 266 to 290 is disordered; the sequence is YEREHNPSSKKKGKNTQVVSKKNKK. Positions 280–290 are enriched in polar residues; it reads NTQVVSKKNKK.

It belongs to the OXA1/ALB3/YidC family. Type 2 subfamily.

Its subcellular location is the cell membrane. Its function is as follows. Required for the insertion and/or proper folding and/or complex formation of integral membrane proteins into the membrane. Involved in integration of membrane proteins that insert both dependently and independently of the Sec translocase complex, as well as at least some lipoproteins. This chain is Membrane protein insertase YidC 2, found in Staphylococcus epidermidis (strain ATCC 35984 / DSM 28319 / BCRC 17069 / CCUG 31568 / BM 3577 / RP62A).